The following is a 218-amino-acid chain: MDVTLNEVEVRVLGSLIEKELTTPEYYPLSLNALTNACNQKSNRDPVLNLDEGEVVRALDSLKFKQLALLSGEGGRVPKYRHALMEKLRLDPPELAVLAELLLRGPQTVGELRTRGERMHPFPDLPAIEEVLEELMARTPALVMRLPRQPGRKDSRYAQLFAGEPQTAAEQSPPPEAARLRVVAENERIGHLEEEVVHLRGEVAELRRLVEEFKSQFE.

This sequence belongs to the UPF0502 family.

The polypeptide is UPF0502 protein Geob_1184 (Geotalea daltonii (strain DSM 22248 / JCM 15807 / FRC-32) (Geobacter daltonii)).